The chain runs to 245 residues: 1-(5-phosphoribosyl)-5-[(5-phosphoribosylamino)methylideneamino] imidazole-4-carboxamide isomerase (245 aa).

Aspartate 7 functions as the Proton acceptor in the catalytic mechanism. The active-site Proton donor is aspartate 129.

It belongs to the HisA/HisF family.

It localises to the cytoplasm. The catalysed reaction is 1-(5-phospho-beta-D-ribosyl)-5-[(5-phospho-beta-D-ribosylamino)methylideneamino]imidazole-4-carboxamide = 5-[(5-phospho-1-deoxy-D-ribulos-1-ylimino)methylamino]-1-(5-phospho-beta-D-ribosyl)imidazole-4-carboxamide. It functions in the pathway amino-acid biosynthesis; L-histidine biosynthesis; L-histidine from 5-phospho-alpha-D-ribose 1-diphosphate: step 4/9. In Shewanella baltica (strain OS223), this protein is 1-(5-phosphoribosyl)-5-[(5-phosphoribosylamino)methylideneamino] imidazole-4-carboxamide isomerase.